The primary structure comprises 117 residues: Synaptobrevin homolog 1 (117 aa).

The tract at residues 1–30 is disordered; that stretch reads MSSSTPFDPYALSEHDEERPQNVQSKSRTA. The Cytoplasmic segment spans residues 1–94; sequence MSSSTPFDPY…MWYKDLKMKM (94 aa). The 61-residue stretch at 28–88 folds into the v-SNARE coiled-coil homology domain; that stretch reads RTAELQAEID…NRVRKAMWYK (61 aa). A Glycyl lysine isopeptide (Lys-Gly) (interchain with G-Cter in ubiquitin) cross-link involves residue K63. C95 carries S-palmitoyl cysteine lipidation. The helical; Anchor for type IV membrane protein transmembrane segment at 95 to 111 threads the bilayer; sequence CLALVIIILLVVIIVPI. The Vesicular segment spans residues 112–117; that stretch reads AVHFSR.

Belongs to the synaptobrevin family. Post-translationally, palmitoylated by SWF1.

It is found in the endomembrane system. In terms of biological role, SNC1 and SNC2 are vesicle-targeting proteins essential for normal secretory traffic between the Golgi and the plasma membrane. They may also be involved in vesicle fusion. This is Synaptobrevin homolog 1 (SNC1) from Saccharomyces cerevisiae (strain ATCC 204508 / S288c) (Baker's yeast).